The sequence spans 218 residues: Cytochrome b6 (218 aa).

A helical transmembrane segment spans residues Ile35 to Phe55. Cys38 contributes to the heme c binding site. Positions 89 and 103 each coordinate heme b. 3 helical membrane passes run Ala93–Phe113, Leu119–Tyr139, and Leu189–Ile209. Positions 190 and 205 each coordinate heme b.

This sequence belongs to the cytochrome b family. PetB subfamily. The 4 large subunits of the cytochrome b6-f complex are cytochrome b6, subunit IV (17 kDa polypeptide, PetD), cytochrome f and the Rieske protein, while the 4 small subunits are PetG, PetL, PetM and PetN. The complex functions as a dimer. It depends on heme b as a cofactor. Heme c serves as cofactor.

It is found in the cellular thylakoid membrane. Its function is as follows. Component of the cytochrome b6-f complex, which mediates electron transfer between photosystem II (PSII) and photosystem I (PSI), cyclic electron flow around PSI, and state transitions. The polypeptide is Cytochrome b6 (Synechococcus sp. (strain RCC307)).